The chain runs to 459 residues: WPP domain-interacting protein 3 (459 aa).

Polar residues predominate over residues 1–17 (MNESVPDSVEDNGNSVP). Positions 1 to 78 (MNESVPDSVE…GPVRDEAAPV (78 aa)) are disordered. The span at 52–66 (STRKGFGLKKWRRIK) shows a compositional bias: basic residues. 2 consecutive short sequence motifs (nuclear localization signal) follow at residues 60 to 61 (KK) and 63 to 64 (RR). Positions 67 to 78 (RDGPVRDEAAPV) are enriched in basic and acidic residues. The short motif at 86–87 (KR) is the Nuclear localization signal 3 element. 2 disordered regions span residues 240–266 (KEEVQTYSRSENGNKEDDGESKKNNNH) and 308–330 (TDELSSDQPSHQNCKEDNSTSSG). A compositionally biased stretch (basic and acidic residues) spans 251 to 266 (NGNKEDDGESKKNNNH). Positions 308 to 319 (TDELSSDQPSHQ) are enriched in polar residues. Residues 331–375 (SKALILKEKVKLLEHKLEEARAALEAKEARIQELENSKIESELEC) are a coiled coil. In terms of domain architecture, KASH spans 426-459 (KLGFYILTQLILLVSILRFLVLQFSPASRLVIPT). A helical membrane pass occupies residues 427–447 (LGFYILTQLILLVSILRFLVL).

In terms of assembly, component of Ran complexes at least composed of WIT1 or WIT2, RANGAP1 or RANGAP2, and WIP1 or WIP2 or WIP3. Interacts with RANGAP1, WPP1/MAF1, and WPP2/MAF2. Interacts with SUN1 and SUN2. Core component of the LINC complex which is composed of inner nuclear membrane SUN domain-containing proteins coupled to outer nuclear membrane WIP and WIT proteins. The LINC complex also involves nucleoskeletal proteins CRWN/LINC and possibly KAKU4 and the cytoskeletal myosin KAKU1. Interacts with WIT2. Expressed in seedlings, roots, stems, leaves, and flowers.

It localises to the nucleus envelope. The protein localises to the nucleus membrane. In terms of biological role, mediates and enhances the nuclear envelope docking of RANGAP proteins mediated by WIT1 and WIT2 in the undifferentiated cells of root tips. As component of the SUN-WIP-WIT2-KAKU1 complex, mediates the transfer of cytoplasmic forces to the nuclear envelope (NE), leading to nuclear shape changes. The chain is WPP domain-interacting protein 3 (WIP3) from Arabidopsis thaliana (Mouse-ear cress).